The chain runs to 337 residues: 1,4-dihydroxy-2-naphthoyl-CoA synthase, peroxisomal (337 aa).

Substrate-binding positions include 97–98 (RR), Lys-133, 137–141 (SGGDQ), 181–185 (YAVGG), Thr-207, and Ser-213. 206 to 208 (QTG) is a hydrogencarbonate binding site.

This sequence belongs to the enoyl-CoA hydratase/isomerase family. MenB subfamily. In terms of assembly, homohexamer. The cofactor is hydrogencarbonate.

It is found in the peroxisome. The enzyme catalyses 2-succinylbenzoyl-CoA + H(+) = 1,4-dihydroxy-2-naphthoyl-CoA + H2O. In terms of biological role, involved in the biosynthesis of phylloquinone (vitamin K1). Converts o-succinylbenzoyl-CoA (OSB-CoA) to 1,4-dihydroxy-2-naphthoyl-CoA (DHNA-CoA). This chain is 1,4-dihydroxy-2-naphthoyl-CoA synthase, peroxisomal (MENB), found in Arabidopsis thaliana (Mouse-ear cress).